Consider the following 350-residue polypeptide: Nuclear pore complex-interacting protein family member A3 (350 aa).

The tract at residues 306-325 is disordered; the sequence is KTPPECLLTPLPPSAPPSVD.

The protein belongs to the NPIP family.

This Homo sapiens (Human) protein is Nuclear pore complex-interacting protein family member A3 (NPIPA3).